The following is a 268-amino-acid chain: Tryptophan synthase alpha chain (268 aa).

Active-site proton acceptor residues include Glu-49 and Asp-60.

This sequence belongs to the TrpA family. As to quaternary structure, tetramer of two alpha and two beta chains.

It catalyses the reaction (1S,2R)-1-C-(indol-3-yl)glycerol 3-phosphate + L-serine = D-glyceraldehyde 3-phosphate + L-tryptophan + H2O. It functions in the pathway amino-acid biosynthesis; L-tryptophan biosynthesis; L-tryptophan from chorismate: step 5/5. Its function is as follows. The alpha subunit is responsible for the aldol cleavage of indoleglycerol phosphate to indole and glyceraldehyde 3-phosphate. This is Tryptophan synthase alpha chain from Mannheimia succiniciproducens (strain KCTC 0769BP / MBEL55E).